The following is a 154-amino-acid chain: Myoglobin (154 aa).

One can recognise a Globin domain in the interval 2 to 148 (GLSDGEWQLV…FRNDMAAKYK (147 aa)). Serine 4 is modified (phosphoserine). Position 65 (histidine 65) interacts with nitrite. Residue histidine 65 participates in O2 binding. Threonine 68 is modified (phosphothreonine). Histidine 94 is a binding site for heme b.

This sequence belongs to the globin family. Monomeric.

The protein localises to the cytoplasm. It is found in the sarcoplasm. The enzyme catalyses Fe(III)-heme b-[protein] + nitric oxide + H2O = Fe(II)-heme b-[protein] + nitrite + 2 H(+). It carries out the reaction H2O2 + AH2 = A + 2 H2O. In terms of biological role, monomeric heme protein which primary function is to store oxygen and facilitate its diffusion within muscle tissues. Reversibly binds oxygen through a pentacoordinated heme iron and enables its timely and efficient release as needed during periods of heightened demand. Depending on the oxidative conditions of tissues and cells, and in addition to its ability to bind oxygen, it also has a nitrite reductase activity whereby it regulates the production of bioactive nitric oxide. Under stress conditions, like hypoxia and anoxia, it also protects cells against reactive oxygen species thanks to its pseudoperoxidase activity. This Lagothrix lagotricha (Brown woolly monkey) protein is Myoglobin (MB).